The primary structure comprises 254 residues: Ribosomal RNA small subunit methyltransferase J (254 aa).

Residues 101–102 (RD), 117–118 (ER), 153–154 (SS), and Asp-171 contribute to the S-adenosyl-L-methionine site.

Belongs to the methyltransferase superfamily. RsmJ family.

It localises to the cytoplasm. The enzyme catalyses guanosine(1516) in 16S rRNA + S-adenosyl-L-methionine = N(2)-methylguanosine(1516) in 16S rRNA + S-adenosyl-L-homocysteine + H(+). Specifically methylates the guanosine in position 1516 of 16S rRNA. In Enterobacter sp. (strain 638), this protein is Ribosomal RNA small subunit methyltransferase J.